We begin with the raw amino-acid sequence, 570 residues long: MSDFVDRVTVHVKGGDGGNGSAGIRREKYKPLAGPNGGNGGKGGSVILKADQNATSLLDFRFMPHRTADSGTMGLGDTKDGSNGADLVLPVPVGTVVFEARGAQGFPKKPGAVLADLRHAGDTYVAAAGGAGGLGNAALANRTRRAPGFALLGEPGDERDIILELKSIADVALVGFPSAGKSSLIAAMSAAKPKIADYPFTTLVPNLGVVQAGDMRYTIADVPGLIPGASQGKGLGLTFLRHIERTEIIAHVIDCVTIDPDRDPLSDYYALEKELGEYADDLDLPLGAIPIPERPRVIILNKIDVPDAKELADFVRPEFEKLDLPVYEISTASHAGLKELNFALAKLVKEMRAQIAEREESVDEERVVIKPLEEPGTQRRNGRNAQVREFEIEREDDGHGNFWFTVTGVKPERWVRQTNFDNDEAVGYLADRLAKLGVEDSLRKHGAHAGDEVRIGRGERAVAFDWDPTIAAGAEMLDGTQLGSRGKDLRLEEEDGRKRRRTNSERRREYHEMMDARAAVRAAMQAERAAGHWADPSIDDDRHDEQSLFGRGEVEEYEDEPGADGSRQLD.

One can recognise an Obg domain in the interval 2 to 168 (SDFVDRVTVH…RDIILELKSI (167 aa)). Residues 15–43 (GDGGNGSAGIRREKYKPLAGPNGGNGGKG) are disordered. Residues 169–349 (ADVALVGFPS…LNFALAKLVK (181 aa)) enclose the OBG-type G domain. Residues 175–182 (GFPSAGKS), 200–204 (FTTLV), 221–224 (DVPG), 301–304 (NKID), and 330–332 (STA) each bind GTP. Mg(2+) is bound by residues Ser-182 and Thr-202. In terms of domain architecture, OCT spans 382 to 468 (GRNAQVREFE…ERAVAFDWDP (87 aa)). Residues 521-570 (RAAMQAERAAGHWADPSIDDDRHDEQSLFGRGEVEEYEDEPGADGSRQLD) form a disordered region.

The protein belongs to the TRAFAC class OBG-HflX-like GTPase superfamily. OBG GTPase family. As to quaternary structure, monomer. The cofactor is Mg(2+).

It localises to the cytoplasm. Its function is as follows. An essential GTPase which binds GTP, GDP and possibly (p)ppGpp with moderate affinity, with high nucleotide exchange rates and a fairly low GTP hydrolysis rate. Plays a role in control of the cell cycle, stress response, ribosome biogenesis and in those bacteria that undergo differentiation, in morphogenesis control. This is GTPase Obg from Bifidobacterium animalis subsp. lactis (strain AD011).